The following is a 127-amino-acid chain: Fluoride-specific ion channel FluC (127 aa).

4 consecutive transmembrane segments (helical) span residues 4-24 (IMLA…WLGL), 35-55 (VGTL…LAWF), 71-91 (TGLC…VFLL), and 101-121 (LNVA…FWLF). Na(+) contacts are provided by G75 and T78.

It belongs to the fluoride channel Fluc/FEX (TC 1.A.43) family.

It localises to the cell inner membrane. The enzyme catalyses fluoride(in) = fluoride(out). Its activity is regulated as follows. Na(+) is not transported, but it plays an essential structural role and its presence is essential for fluoride channel function. Functionally, fluoride-specific ion channel. Important for reducing fluoride concentration in the cell, thus reducing its toxicity. This Cronobacter sakazakii (strain ATCC BAA-894) (Enterobacter sakazakii) protein is Fluoride-specific ion channel FluC.